Here is a 302-residue protein sequence, read N- to C-terminus: NAD kinase 2 (302 aa).

Aspartate 78 serves as the catalytic Proton acceptor. Residues 78 to 79 (DG), 152 to 153 (NE), aspartate 182, and 193 to 198 (TAYSLS) each bind NAD(+).

Belongs to the NAD kinase family. A divalent metal cation serves as cofactor.

The protein resides in the cytoplasm. It carries out the reaction NAD(+) + ATP = ADP + NADP(+) + H(+). Involved in the regulation of the intracellular balance of NAD and NADP, and is a key enzyme in the biosynthesis of NADP. Catalyzes specifically the phosphorylation on 2'-hydroxyl of the adenosine moiety of NAD to yield NADP. This Prochlorococcus marinus (strain NATL2A) protein is NAD kinase 2.